We begin with the raw amino-acid sequence, 188 residues long: MGLKPDKWIREKSLNEAMITPFCEGLVGEGVVSYGLSSYGYDIRVSDEFKIFTNINAEVVDPKDFNENNVVDFKGDICIVPPNSFALARTVEYFRMPKDTLAICLGKSTYARCGIIVNVTPFEPGFEGHITIEISNTTPLPAKIYANEGIAQVLFLEGDEQCETTYSDRKGKYQSQTGITLPRILKQQ.

107–112 lines the dCTP pocket; it reads KSTYAR. The active-site Proton donor/acceptor is the Glu-133. DCTP contacts are provided by Gln-152, Tyr-166, and Gln-176.

This sequence belongs to the dCTP deaminase family. As to quaternary structure, homotrimer.

It carries out the reaction dCTP + H2O + H(+) = dUTP + NH4(+). Its pathway is pyrimidine metabolism; dUMP biosynthesis; dUMP from dCTP (dUTP route): step 1/2. Catalyzes the deamination of dCTP to dUTP. The protein is dCTP deaminase of Sulfurovum sp. (strain NBC37-1).